The primary structure comprises 477 residues: Aspartyl/glutamyl-tRNA(Asn/Gln) amidotransferase subunit B (477 aa).

Belongs to the GatB/GatE family. GatB subfamily. In terms of assembly, heterotrimer of A, B and C subunits.

It carries out the reaction L-glutamyl-tRNA(Gln) + L-glutamine + ATP + H2O = L-glutaminyl-tRNA(Gln) + L-glutamate + ADP + phosphate + H(+). It catalyses the reaction L-aspartyl-tRNA(Asn) + L-glutamine + ATP + H2O = L-asparaginyl-tRNA(Asn) + L-glutamate + ADP + phosphate + 2 H(+). Allows the formation of correctly charged Asn-tRNA(Asn) or Gln-tRNA(Gln) through the transamidation of misacylated Asp-tRNA(Asn) or Glu-tRNA(Gln) in organisms which lack either or both of asparaginyl-tRNA or glutaminyl-tRNA synthetases. The reaction takes place in the presence of glutamine and ATP through an activated phospho-Asp-tRNA(Asn) or phospho-Glu-tRNA(Gln). This chain is Aspartyl/glutamyl-tRNA(Asn/Gln) amidotransferase subunit B, found in Clostridium tetani (strain Massachusetts / E88).